We begin with the raw amino-acid sequence, 293 residues long: MKILTPATSANLGPGFDSLGLSLKLYNEVTITKQNFTSVCISGEGSDKIGLKKNNTFVNIFNETMLYLTGKTPNFRFNFINNIPFSRGLGSSSSVIVGAIASAYHMAGFKVDRALVLNQALKYESHPDNISPAVWGGFTSNIVHKGTVYTQKADISSDLRAVVVIPDKPTSTKQSRGKLPKTYPMADVISNVSHAAFLTACFIKQDYENLRLASIDKMHEIRRMHGLKELFRVREIAYLSGALMSNLSGSGSSFLNLAHKDRAQTLRDILQLEFPEFKVEIYELDNNGFILQS.

An ATP-binding site is contributed by 84-94; that stretch reads PFSRGLGSSSS.

Belongs to the GHMP kinase family. Homoserine kinase subfamily.

The protein resides in the cytoplasm. It catalyses the reaction L-homoserine + ATP = O-phospho-L-homoserine + ADP + H(+). Its pathway is amino-acid biosynthesis; L-threonine biosynthesis; L-threonine from L-aspartate: step 4/5. In terms of biological role, catalyzes the ATP-dependent phosphorylation of L-homoserine to L-homoserine phosphate. In Campylobacter fetus subsp. fetus (strain 82-40), this protein is Homoserine kinase.